A 44-amino-acid polypeptide reads, in one-letter code: uncharacterized protein (44 aa).

The helical transmembrane segment at 6–26 threads the bilayer; sequence SILIRGGGGVLIVLILLLWIV.

The protein resides in the membrane. This is an uncharacterized protein from Ornithodoros (relapsing fever ticks).